The sequence spans 296 residues: Glycerol-3-phosphate dehydrogenase [NAD(P)+] (296 aa).

Residues tryptophan 12, arginine 31, and lysine 80 each contribute to the NADPH site. Positions 80, 108, and 110 each coordinate sn-glycerol 3-phosphate. Position 112 (alanine 112) interacts with NADPH. Sn-glycerol 3-phosphate-binding residues include lysine 162, aspartate 215, serine 225, arginine 226, and asparagine 227. Lysine 162 acts as the Proton acceptor in catalysis. Arginine 226 serves as a coordination point for NADPH. Positions 250 and 252 each coordinate NADPH.

This sequence belongs to the NAD-dependent glycerol-3-phosphate dehydrogenase family.

It is found in the cytoplasm. The enzyme catalyses sn-glycerol 3-phosphate + NAD(+) = dihydroxyacetone phosphate + NADH + H(+). It catalyses the reaction sn-glycerol 3-phosphate + NADP(+) = dihydroxyacetone phosphate + NADPH + H(+). It functions in the pathway membrane lipid metabolism; glycerophospholipid metabolism. Functionally, catalyzes the reduction of the glycolytic intermediate dihydroxyacetone phosphate (DHAP) to sn-glycerol 3-phosphate (G3P), the key precursor for phospholipid synthesis. In Sulfurimonas denitrificans (strain ATCC 33889 / DSM 1251) (Thiomicrospira denitrificans (strain ATCC 33889 / DSM 1251)), this protein is Glycerol-3-phosphate dehydrogenase [NAD(P)+].